The sequence spans 1997 residues: Protein MOR1 (1997 aa).

2 HEAT repeats span residues aspartate 48–alanine 86 and valine 164–lysine 202. A disordered region spans residues arginine 236–valine 264. HEAT repeat units follow at residues proline 321–threonine 359, serine 362–isoleucine 400, and leucine 441–methionine 479. Positions isoleucine 501–alanine 576 are disordered. The segment covering alanine 504–glycine 520 has biased composition (polar residues). The span at serine 529–methionine 539 shows a compositional bias: low complexity. HEAT repeat units follow at residues glutamate 848–lysine 886, proline 890–proline 928, glutamate 931–leucine 969, and proline 1007–glutamine 1045. Residues methionine 1087 to glutamine 1115 form a disordered region. HEAT repeat units follow at residues threonine 1233 to glutamate 1259, alanine 1260 to isoleucine 1294, tyrosine 1295 to threonine 1332, and valine 1334 to aspartate 1372. Over residues methionine 1400–aspartate 1410 the composition is skewed to basic and acidic residues. A disordered region spans residues methionine 1400 to arginine 1436. One copy of the HEAT 14 repeat lies at arginine 1539–aspartate 1579. The interval methionine 1755–aspartate 1776 is disordered. The span at glycine 1764–aspartate 1776 shows a compositional bias: polar residues.

This sequence belongs to the TOG/XMAP215 family.

It is found in the cytoplasm. Its subcellular location is the cytoskeleton. Its function is as follows. Microtubule-associated protein that is essential for cortical microtubules organization and function. The protein is Protein MOR1 (MOR1) of Oryza sativa subsp. japonica (Rice).